The following is a 428-amino-acid chain: UPF0229 protein YeaH (428 aa).

Positions 78 to 90 are enriched in basic and acidic residues; sequence GNDHFIQNDRIER. Residues 78 to 111 are disordered; the sequence is GNDHFIQNDRIERPQGGGGGGSGSGQGQASQDGE. The span at 92-103 shows a compositional bias: gly residues; sequence QGGGGGGSGSGQ.

It belongs to the UPF0229 family.

This Salmonella enteritidis PT4 (strain P125109) protein is UPF0229 protein YeaH.